A 465-amino-acid chain; its full sequence is GTPase Der (465 aa).

2 EngA-type G domains span residues 3–167 (PLVA…PEEG) and 179–352 (VRIA…ASAT). GTP-binding positions include 9-16 (GRPNVGKS), 57-61 (DTGGI), 119-122 (NKID), 185-192 (GRPNVGKS), 232-236 (DTAGL), and 297-300 (NKWD). The KH-like domain maps to 353-437 (HEFSTSEVNQ…PVRFIFREGA (85 aa)).

It belongs to the TRAFAC class TrmE-Era-EngA-EngB-Septin-like GTPase superfamily. EngA (Der) GTPase family. In terms of assembly, associates with the 50S ribosomal subunit.

GTPase that plays an essential role in the late steps of ribosome biogenesis. The sequence is that of GTPase Der from Xanthomonas campestris pv. campestris (strain 8004).